The primary structure comprises 295 residues: MTSTINKPLDGEGSVQVKQDPKINIEEGALVIAVYGKGGIGKSTTSSNLSAAFSKLGKKVLQIGCDPKHDSTFTLTHKMVPTVIDILEEVDFHSEELRPNDFMFEGFNGVMCVESGGPPAGTGCGGYVTGQTVKLLKEHHLLEDTDVVIFDVLGDVVCGGFAAPLQHANYCLIVTANDFDSIFAMNRIVSAIKAKAKNYKVRLGGVVANRSKDTDQIDKFNERTGLKTMAHFKDVDAIRRSRLKKCTIFEMEPTEDVIEVQNEYLSLAKNMLENVEPLEGNPLKDREIFDLLGFD.

ATP is bound by residues 39-44 and Lys68; that span reads GIGKST. Ser43 contributes to the Mg(2+) binding site. [4Fe-4S] cluster-binding residues include Cys124 and Cys158. 209–210 contributes to the ATP binding site; sequence NR.

The protein belongs to the NifH/BchL/ChlL family. In terms of assembly, homodimer. Protochlorophyllide reductase is composed of three subunits; ChlL, ChlN and ChlB. [4Fe-4S] cluster is required as a cofactor.

The enzyme catalyses chlorophyllide a + oxidized 2[4Fe-4S]-[ferredoxin] + 2 ADP + 2 phosphate = protochlorophyllide a + reduced 2[4Fe-4S]-[ferredoxin] + 2 ATP + 2 H2O. It functions in the pathway porphyrin-containing compound metabolism; chlorophyll biosynthesis (light-independent). In terms of biological role, component of the dark-operative protochlorophyllide reductase (DPOR) that uses Mg-ATP and reduced ferredoxin to reduce ring D of protochlorophyllide (Pchlide) to form chlorophyllide a (Chlide). This reaction is light-independent. The L component serves as a unique electron donor to the NB-component of the complex, and binds Mg-ATP. The polypeptide is Light-independent protochlorophyllide reductase iron-sulfur ATP-binding protein (Prochlorococcus marinus (strain MIT 9215)).